A 130-amino-acid chain; its full sequence is Small ribosomal subunit protein uS11 (130 aa).

Belongs to the universal ribosomal protein uS11 family. In terms of assembly, part of the 30S ribosomal subunit. Interacts with proteins S7 and S18. Binds to IF-3.

Located on the platform of the 30S subunit, it bridges several disparate RNA helices of the 16S rRNA. Forms part of the Shine-Dalgarno cleft in the 70S ribosome. This chain is Small ribosomal subunit protein uS11, found in Xylella fastidiosa (strain M12).